The following is a 221-amino-acid chain: Guanylate kinase (221 aa).

Residues 20-199 enclose the Guanylate kinase-like domain; it reads GLMFILSSPS…CFGKVREILA (180 aa). 27–34 is a binding site for ATP; sequence SPSGAGKT.

Belongs to the guanylate kinase family.

Its subcellular location is the cytoplasm. The catalysed reaction is GMP + ATP = GDP + ADP. In terms of biological role, essential for recycling GMP and indirectly, cGMP. The sequence is that of Guanylate kinase from Novosphingobium aromaticivorans (strain ATCC 700278 / DSM 12444 / CCUG 56034 / CIP 105152 / NBRC 16084 / F199).